The sequence spans 160 residues: SsrA-binding protein (160 aa).

The protein belongs to the SmpB family.

It localises to the cytoplasm. Functionally, required for rescue of stalled ribosomes mediated by trans-translation. Binds to transfer-messenger RNA (tmRNA), required for stable association of tmRNA with ribosomes. tmRNA and SmpB together mimic tRNA shape, replacing the anticodon stem-loop with SmpB. tmRNA is encoded by the ssrA gene; the 2 termini fold to resemble tRNA(Ala) and it encodes a 'tag peptide', a short internal open reading frame. During trans-translation Ala-aminoacylated tmRNA acts like a tRNA, entering the A-site of stalled ribosomes, displacing the stalled mRNA. The ribosome then switches to translate the ORF on the tmRNA; the nascent peptide is terminated with the 'tag peptide' encoded by the tmRNA and targeted for degradation. The ribosome is freed to recommence translation, which seems to be the essential function of trans-translation. The protein is SsrA-binding protein of Actinobacillus succinogenes (strain ATCC 55618 / DSM 22257 / CCUG 43843 / 130Z).